We begin with the raw amino-acid sequence, 383 residues long: Probable endopolygalacturonase C (383 aa).

An N-terminal signal peptide occupies residues 1 to 16 (MVRQLILISSLLAAVA). Residues 17-40 (VRAPADPAHPMVTEAPDVNLVEKR) constitute a propeptide that is removed on maturation. Cysteine 44 and cysteine 62 are disulfide-bonded. PbH1 repeat units lie at residues 175–206 (STDL…DIGE) and 207–228 (STYI…AINS). Aspartate 221 (proton donor) is an active-site residue. The cysteines at positions 223 and 239 are disulfide-linked. The active site involves histidine 243. PbH1 repeat units lie at residues 253-279 (RDDN…RIKT) and 287-309 (VSEV…VIEQ). Asparagine 260 carries an N-linked (GlcNAc...) asparagine glycan. 2 disulfide bridges follow: cysteine 348–cysteine 353 and cysteine 372–cysteine 381.

Belongs to the glycosyl hydrolase 28 family.

Its subcellular location is the secreted. It carries out the reaction (1,4-alpha-D-galacturonosyl)n+m + H2O = (1,4-alpha-D-galacturonosyl)n + (1,4-alpha-D-galacturonosyl)m.. Functionally, involved in maceration and soft-rotting of plant tissue. Hydrolyzes the 1,4-alpha glycosidic bonds of de-esterified pectate in the smooth region of the plant cell wall. In Aspergillus niger, this protein is Probable endopolygalacturonase C (pgaC).